The following is a 370-amino-acid chain: Small ribosomal subunit biogenesis GTPase RsgA (370 aa).

The CP-type G domain maps to 97 to 255 (QTQLDRPPIA…LADTPGFNQP (159 aa)). GTP contacts are provided by residues 146–149 (NKSD) and 197–205 (GPSGVGKSS). Residues Cys280, Cys285, His287, and Cys293 each contribute to the Zn(2+) site. Residues 328-370 (TLKLKTKGKGQSQYEPKLESKKYRRTSRRTQVQGLQDLYQEEE) form a disordered region.

The protein belongs to the TRAFAC class YlqF/YawG GTPase family. RsgA subfamily. As to quaternary structure, monomer. Associates with 30S ribosomal subunit, binds 16S rRNA. Zn(2+) serves as cofactor.

Its subcellular location is the cytoplasm. One of several proteins that assist in the late maturation steps of the functional core of the 30S ribosomal subunit. Helps release RbfA from mature subunits. May play a role in the assembly of ribosomal proteins into the subunit. Circularly permuted GTPase that catalyzes slow GTP hydrolysis, GTPase activity is stimulated by the 30S ribosomal subunit. The sequence is that of Small ribosomal subunit biogenesis GTPase RsgA from Trichormus variabilis (strain ATCC 29413 / PCC 7937) (Anabaena variabilis).